A 145-amino-acid polypeptide reads, in one-letter code: D-aminoacyl-tRNA deacylase (145 aa).

A Gly-cisPro motif, important for rejection of L-amino acids motif is present at residues 137 to 138 (GP).

This sequence belongs to the DTD family. Homodimer.

The protein resides in the cytoplasm. The catalysed reaction is glycyl-tRNA(Ala) + H2O = tRNA(Ala) + glycine + H(+). The enzyme catalyses a D-aminoacyl-tRNA + H2O = a tRNA + a D-alpha-amino acid + H(+). In terms of biological role, an aminoacyl-tRNA editing enzyme that deacylates mischarged D-aminoacyl-tRNAs. Also deacylates mischarged glycyl-tRNA(Ala), protecting cells against glycine mischarging by AlaRS. Acts via tRNA-based rather than protein-based catalysis; rejects L-amino acids rather than detecting D-amino acids in the active site. By recycling D-aminoacyl-tRNA to D-amino acids and free tRNA molecules, this enzyme counteracts the toxicity associated with the formation of D-aminoacyl-tRNA entities in vivo and helps enforce protein L-homochirality. This is D-aminoacyl-tRNA deacylase from Psychromonas ingrahamii (strain DSM 17664 / CCUG 51855 / 37).